The chain runs to 462 residues: NAD-capped RNA hydrolase NUDT12 (462 aa).

3 ANK repeats span residues 11–40, 45–74, and 78–98; these read EIVT…SLLN, NGWT…DRSI, and SRQT…ANLL. K185 carries the N6-succinyllysine modification. 2 residues coordinate Zn(2+): C284 and C287. K292 carries the N6-succinyllysine modification. C302 and C307 together coordinate Zn(2+). Residues Y318, 354–356, E370, E374, and E415 contribute to the substrate site; that span reads AGF. The Nudix hydrolase domain occupies 319–453; sequence PRVDPVVIMQ…SRAIAHQLIK (135 aa). The Mg(2+) site is built by A354, E370, E374, and E415. Positions 355–376 match the Nudix box motif; that stretch reads GFIEPGETIEDAVRREVEEESG. The Microbody targeting signal signature appears at 460-462; the sequence is PNL.

The protein belongs to the Nudix hydrolase family. NudC subfamily. As to quaternary structure, homodimer. Homodimerization is essential for its catalytic activity and protein stability. Interacts (via ANK repeats) with BLMH. It depends on Mg(2+) as a cofactor. The cofactor is Zn(2+).

The protein resides in the cytoplasm. It is found in the peroxisome. Its subcellular location is the cytoplasmic granule. The enzyme catalyses a 5'-end NAD(+)-phospho-ribonucleoside in mRNA + H2O = a 5'-end phospho-adenosine-phospho-ribonucleoside in mRNA + beta-nicotinamide D-ribonucleotide + 2 H(+). The catalysed reaction is NAD(+) + H2O = beta-nicotinamide D-ribonucleotide + AMP + 2 H(+). It carries out the reaction NADH + H2O = reduced beta-nicotinamide D-ribonucleotide + AMP + 2 H(+). It catalyses the reaction NADPH + H2O = reduced beta-nicotinamide D-ribonucleotide + adenosine 2',5'-bisphosphate + 2 H(+). Functionally, mRNA decapping enzyme that specifically removes the nicotinamide adenine dinucleotide (NAD) cap from a subset of mRNAs by hydrolyzing the diphosphate linkage to produce nicotinamide mononucleotide (NMN) and 5' monophosphate mRNA. The NAD-cap is present at the 5'-end of some RNAs; in contrast to the canonical N7 methylguanosine (m7G) cap, the NAD cap promotes mRNA decay. Preferentially acts on NAD-capped transcripts in response to nutrient stress. Also acts on free nicotinamide adenine dinucleotide molecules: hydrolyzes NAD(H) into NMN(H) and AMP, and NADPH into NMNH and 2',5'-ADP. May act to regulate the concentration of peroxisomal nicotinamide nucleotide cofactors required for oxidative metabolism in this organelle. Regulates the levels of circadian clock components PER1, PER2, PER3 and CRY2 in the liver. The chain is NAD-capped RNA hydrolase NUDT12 from Pongo abelii (Sumatran orangutan).